The sequence spans 616 residues: Chaperone protein HtpG (616 aa).

An a; substrate-binding region spans residues 1-333; the sequence is MKKQFDTEVN…CQDLPLNVSR (333 aa). A b region spans residues 334–542; sequence EILQQNKILS…SNDPTYQMQK (209 aa). Residues 543–616 form a c region; sequence IMLSMGQEVK…INEFLEKDLL (74 aa).

This sequence belongs to the heat shock protein 90 family. In terms of assembly, homodimer.

It localises to the cytoplasm. Functionally, molecular chaperone. Has ATPase activity. This chain is Chaperone protein HtpG, found in Borreliella afzelii (strain PKo) (Borrelia afzelii).